A 430-amino-acid polypeptide reads, in one-letter code: UDP-N-acetylglucosamine 1-carboxyvinyltransferase (430 aa).

22-23 (KN) lines the phosphoenolpyruvate pocket. Residue R102 coordinates UDP-N-acetyl-alpha-D-glucosamine. The Proton donor role is filled by C126. C126 is modified (2-(S-cysteinyl)pyruvic acid O-phosphothioketal). UDP-N-acetyl-alpha-D-glucosamine is bound by residues 131-135 (RPVDL), 172-175 (KVSV), D317, and I339.

Belongs to the EPSP synthase family. MurA subfamily.

The protein resides in the cytoplasm. It catalyses the reaction phosphoenolpyruvate + UDP-N-acetyl-alpha-D-glucosamine = UDP-N-acetyl-3-O-(1-carboxyvinyl)-alpha-D-glucosamine + phosphate. The protein operates within cell wall biogenesis; peptidoglycan biosynthesis. Cell wall formation. Adds enolpyruvyl to UDP-N-acetylglucosamine. In Rhizobium meliloti (strain 1021) (Ensifer meliloti), this protein is UDP-N-acetylglucosamine 1-carboxyvinyltransferase.